The sequence spans 1506 residues: ABC transporter C family member 9 (1506 aa).

Transmembrane regions (helical) follow at residues 37–57 (MQVT…FGVV), 84–104 (ISLL…LLLF), 116–136 (VSVF…SVVV), 150–170 (MLRS…AHFI), 179–199 (FQDY…AVSI), 315–335 (AINA…PYLI), 350–370 (LNHG…ETVT), 427–447 (FIWY…AIYI), 452–472 (LGLG…CNYP), 541–561 (FILW…CMLM), and 567–587 (AGAV…IFGL). Residues 314 to 596 (AAINAVFAVV…LPDLLSALVQ (283 aa)) enclose the ABC transmembrane type-1 1 domain. An ABC transporter 1 domain is found at 630-853 (VEIENGAFSW…NIGFEVLVGA (224 aa)). An ATP-binding site is contributed by 665 to 672 (GAVGSGKS). Helical transmembrane passes span 934 to 956 (LLVP…SNYW), 976 to 996 (ILLV…ARTI), 1048 to 1068 (MAVK…TIFV), 1167 to 1187 (LSHF…EGVI), and 1191 to 1211 (IAGL…TVIW). Residues 936-1218 (VPFIILAQSC…VIWNICNAEN (283 aa)) form the ABC transmembrane type-1 2 domain. The ABC transporter 2 domain maps to 1257 to 1489 (FRDLQVRYAE…EDSFFSKLIK (233 aa)). 1289-1296 (GRTGSGKS) serves as a coordination point for ATP.

This sequence belongs to the ABC transporter superfamily. ABCC family. Conjugate transporter (TC 3.A.1.208) subfamily. Ubiquitous.

It localises to the membrane. It carries out the reaction ATP + H2O + xenobioticSide 1 = ADP + phosphate + xenobioticSide 2.. Its function is as follows. Pump for glutathione S-conjugates. The chain is ABC transporter C family member 9 (ABCC9) from Arabidopsis thaliana (Mouse-ear cress).